The following is a 413-amino-acid chain: 4-hydroxy-3-methylbut-2-en-1-yl diphosphate synthase (flavodoxin) (413 aa).

Positions 305, 308, 351, and 358 each coordinate [4Fe-4S] cluster.

This sequence belongs to the IspG family. It depends on [4Fe-4S] cluster as a cofactor.

The enzyme catalyses (2E)-4-hydroxy-3-methylbut-2-enyl diphosphate + oxidized [flavodoxin] + H2O + 2 H(+) = 2-C-methyl-D-erythritol 2,4-cyclic diphosphate + reduced [flavodoxin]. Its pathway is isoprenoid biosynthesis; isopentenyl diphosphate biosynthesis via DXP pathway; isopentenyl diphosphate from 1-deoxy-D-xylulose 5-phosphate: step 5/6. Converts 2C-methyl-D-erythritol 2,4-cyclodiphosphate (ME-2,4cPP) into 1-hydroxy-2-methyl-2-(E)-butenyl 4-diphosphate. The protein is 4-hydroxy-3-methylbut-2-en-1-yl diphosphate synthase (flavodoxin) of Bartonella tribocorum (strain CIP 105476 / IBS 506).